Reading from the N-terminus, the 155-residue chain is Small ribosomal subunit protein uS7c (155 aa).

The protein belongs to the universal ribosomal protein uS7 family. Part of the 30S ribosomal subunit.

It is found in the plastid. Its subcellular location is the chloroplast. Functionally, one of the primary rRNA binding proteins, it binds directly to 16S rRNA where it nucleates assembly of the head domain of the 30S subunit. This is Small ribosomal subunit protein uS7c (rps7) from Ananas comosus (Pineapple).